The chain runs to 94 residues: PqqA binding protein (94 aa).

It belongs to the PqqD family. Monomer. Interacts with PqqE.

Its pathway is cofactor biosynthesis; pyrroloquinoline quinone biosynthesis. Functions as a PqqA binding protein and presents PqqA to PqqE, in the pyrroloquinoline quinone (PQQ) biosynthetic pathway. The protein is PqqA binding protein of Acinetobacter baumannii (strain SDF).